The primary structure comprises 103 residues: Small ribosomal subunit protein uS10 (103 aa).

This sequence belongs to the universal ribosomal protein uS10 family. Part of the 30S ribosomal subunit.

Involved in the binding of tRNA to the ribosomes. The sequence is that of Small ribosomal subunit protein uS10 from Xanthomonas axonopodis pv. citri (strain 306).